A 512-amino-acid polypeptide reads, in one-letter code: Glucose-1-phosphate adenylyltransferase small subunit 2, chloroplastic (512 aa).

The interval 1–21 (MAAIGVLKVPPSSSSSSSSSS) is disordered. Residues 1–63 (MAAIGVLKVP…RNPFIVSPKA (63 aa)) constitute a chloroplast transit peptide. A compositionally biased stretch (low complexity) spans 12-21 (SSSSSSSSSS).

The protein belongs to the bacterial/plant glucose-1-phosphate adenylyltransferase family. Heterotetramer. Leaves and seeds.

The protein resides in the plastid. It localises to the chloroplast. The enzyme catalyses alpha-D-glucose 1-phosphate + ATP + H(+) = ADP-alpha-D-glucose + diphosphate. The protein operates within glycan biosynthesis; starch biosynthesis. With respect to regulation, activated by 3'phosphoglycerate, inhibited by orthophosphate. Allosteric regulation. Its function is as follows. This protein plays a role in synthesis of starch. It catalyzes the synthesis of the activated glycosyl donor, ADP-glucose from Glc-1-P and ATP. This is Glucose-1-phosphate adenylyltransferase small subunit 2, chloroplastic (AGPP) from Vicia faba (Broad bean).